A 1072-amino-acid polypeptide reads, in one-letter code: DNA-directed RNA polymerase subunit beta (1072 aa).

The protein belongs to the RNA polymerase beta chain family. In plastids the minimal PEP RNA polymerase catalytic core is composed of four subunits: alpha, beta, beta', and beta''. When a (nuclear-encoded) sigma factor is associated with the core the holoenzyme is formed, which can initiate transcription.

Its subcellular location is the plastid. The protein resides in the chloroplast. The catalysed reaction is RNA(n) + a ribonucleoside 5'-triphosphate = RNA(n+1) + diphosphate. In terms of biological role, DNA-dependent RNA polymerase catalyzes the transcription of DNA into RNA using the four ribonucleoside triphosphates as substrates. This is DNA-directed RNA polymerase subunit beta from Barbarea verna (Land cress).